The sequence spans 397 residues: Succinyl-diaminopimelate desuccinylase (397 aa).

His73 contributes to the Zn(2+) binding site. Asp75 is an active-site residue. Asp106 provides a ligand contact to Zn(2+). Glu140 acts as the Proton acceptor in catalysis. Zn(2+)-binding residues include Glu141, Glu169, and His366.

This sequence belongs to the peptidase M20A family. DapE subfamily. Homodimer. It depends on Zn(2+) as a cofactor. Co(2+) serves as cofactor.

It carries out the reaction N-succinyl-(2S,6S)-2,6-diaminopimelate + H2O = (2S,6S)-2,6-diaminopimelate + succinate. Its pathway is amino-acid biosynthesis; L-lysine biosynthesis via DAP pathway; LL-2,6-diaminopimelate from (S)-tetrahydrodipicolinate (succinylase route): step 3/3. In terms of biological role, catalyzes the hydrolysis of N-succinyl-L,L-diaminopimelic acid (SDAP), forming succinate and LL-2,6-diaminopimelate (DAP), an intermediate involved in the bacterial biosynthesis of lysine and meso-diaminopimelic acid, an essential component of bacterial cell walls. This chain is Succinyl-diaminopimelate desuccinylase, found in Rhizobium leguminosarum bv. trifolii (strain WSM2304).